The primary structure comprises 795 residues: Phenylalanine--tRNA ligase beta subunit (795 aa).

The tRNA-binding domain occupies 39–148; sequence AGEFTGVKVG…EGTTLGADVR (110 aa). The B5 domain maps to 401-476; sequence PKANTVELRR…RIYGYNNIPN (76 aa). Residues aspartate 454, aspartate 460, glutamate 463, and glutamate 464 each contribute to the Mg(2+) site. In terms of domain architecture, FDX-ACB spans 701–794; the sequence is SKFPANRRDI…IGEKFSATLR (94 aa).

The protein belongs to the phenylalanyl-tRNA synthetase beta subunit family. Type 1 subfamily. In terms of assembly, tetramer of two alpha and two beta subunits. The cofactor is Mg(2+).

It localises to the cytoplasm. It catalyses the reaction tRNA(Phe) + L-phenylalanine + ATP = L-phenylalanyl-tRNA(Phe) + AMP + diphosphate + H(+). The protein is Phenylalanine--tRNA ligase beta subunit of Aliivibrio fischeri (strain ATCC 700601 / ES114) (Vibrio fischeri).